We begin with the raw amino-acid sequence, 325 residues long: ATP phosphoribosyltransferase (325 aa).

It belongs to the ATP phosphoribosyltransferase family. Long subfamily. Requires Mg(2+) as cofactor.

The protein resides in the cytoplasm. It catalyses the reaction 1-(5-phospho-beta-D-ribosyl)-ATP + diphosphate = 5-phospho-alpha-D-ribose 1-diphosphate + ATP. It participates in amino-acid biosynthesis; L-histidine biosynthesis; L-histidine from 5-phospho-alpha-D-ribose 1-diphosphate: step 1/9. Feedback inhibited by histidine. Functionally, catalyzes the condensation of ATP and 5-phosphoribose 1-diphosphate to form N'-(5'-phosphoribosyl)-ATP (PR-ATP). Has a crucial role in the pathway because the rate of histidine biosynthesis seems to be controlled primarily by regulation of HisG enzymatic activity. The chain is ATP phosphoribosyltransferase from Rhodopseudomonas palustris (strain BisA53).